The sequence spans 945 residues: Isoleucine--tRNA ligase (945 aa).

The 'HIGH' region motif lies at 66 to 76 (PYANGDIHLGH). Glu-581 is a binding site for L-isoleucyl-5'-AMP. Positions 622–626 (KMSKS) match the 'KMSKS' region motif. Lys-625 contacts ATP. Zn(2+)-binding residues include Cys-908, Cys-911, Cys-928, and Cys-931.

The protein belongs to the class-I aminoacyl-tRNA synthetase family. IleS type 1 subfamily. Monomer. Requires Zn(2+) as cofactor.

The protein localises to the cytoplasm. The enzyme catalyses tRNA(Ile) + L-isoleucine + ATP = L-isoleucyl-tRNA(Ile) + AMP + diphosphate. Functionally, catalyzes the attachment of isoleucine to tRNA(Ile). As IleRS can inadvertently accommodate and process structurally similar amino acids such as valine, to avoid such errors it has two additional distinct tRNA(Ile)-dependent editing activities. One activity is designated as 'pretransfer' editing and involves the hydrolysis of activated Val-AMP. The other activity is designated 'posttransfer' editing and involves deacylation of mischarged Val-tRNA(Ile). The chain is Isoleucine--tRNA ligase from Burkholderia cenocepacia (strain ATCC BAA-245 / DSM 16553 / LMG 16656 / NCTC 13227 / J2315 / CF5610) (Burkholderia cepacia (strain J2315)).